The following is a 313-amino-acid chain: MPDKAGRKMQVAIVGSGNISTDLLYKLLRSEWLEPRWMIGIDPQSEGLARARTLGLETSHEGVDWLLARDELPDMVFEATSAYVHRDAAPRYAEAGIRAIDLTPAAVGPGVIPPANLREHLDAPNVNLVTCGGQATIPMVHAVSRVVGVPYAEIVASVSSASAGPGTRANIDEFTKTTSKGVETIGGARRGKAIIILNPADPPMIMRDTIFCAIPEDADQDAITASIKEVVAQVQTYVPGYRLLNEPQFDPPSVNSGGQALVTTFVEVEGAGDYLPPYAGNLDIMTAAATKVGEEIAAKLAGASLSASSGGRS.

Residue 16–19 (SGNI) participates in NAD(+) binding. Cys-131 functions as the Acyl-thioester intermediate in the catalytic mechanism. Residues 162–170 (SAGPGTRAN) and Asn-281 contribute to the NAD(+) site.

This sequence belongs to the acetaldehyde dehydrogenase family.

The catalysed reaction is acetaldehyde + NAD(+) + CoA = acetyl-CoA + NADH + H(+). The polypeptide is Acetaldehyde dehydrogenase 1 (Mycobacterium sp. (strain JLS)).